Consider the following 1072-residue polypeptide: Dyslexia-associated protein KIAA0319 (1072 aa).

An N-terminal signal peptide occupies residues 1-20; the sequence is MAPPTGVLSSLLLLVTIAGC. The MANSC domain occupies 21 to 99; it reads ARKQCSEGRT…PKKMGPIRSY (79 aa). Residues 21-955 lie on the Extracellular side of the membrane; it reads ARKQCSEGRT…WDGESNCEWS (935 aa). 2 disordered regions span residues 168 to 277 and 295 to 327; these read LQPS…SLPP and VTPGSTEHSIPTPPTSAAPSESTPSELPISPTT. N-linked (GlcNAc...) asparagine glycosylation is found at N196, N219, and N262. A compositionally biased stretch (polar residues) spans 254 to 265; the sequence is SQLQEQSSNSSG. The span at 311–320 shows a compositional bias: low complexity; the sequence is AAPSESTPSE. 5 consecutive PKD domains span residues 341 to 427, 435 to 524, 530 to 620, 621 to 714, and 720 to 811; these read DNLI…VKPA, VAVV…VNNA, VANA…VQPE, NNRP…VKKE, and RARA…VQPD. N-linked (GlcNAc...) asparagine glycans are attached at residues N394, N421, N498, N513, N536, and N551. The N-linked (GlcNAc...) asparagine glycan is linked to N733. A helical membrane pass occupies residues 956-976; the sequence is IFYVTVLAFTLIVLTGGFTWL. Topologically, residues 977 to 1072 are cytoplasmic; it reads CICCCKRQKR…ASFSYCSKDR (96 aa). An Endocytosis signal motif is present at residues 995 to 998; sequence YTIL. A disordered region spans residues 1045–1072; that stretch reads KMERGNPKVSMNGSIRNGASFSYCSKDR. The segment covering 1053–1072 has biased composition (polar residues); it reads VSMNGSIRNGASFSYCSKDR.

In terms of assembly, homodimer. Interacts with AP2M1; required for clathrin-mediated endocytosis. Post-translationally, N-glycosylated. In terms of processing, O-glycosylated. Shedding of the extracellular domain and intramembrane cleavage produce several proteolytic products. The intramembrane cleavage releases a soluble cytoplasmic polypeptide that translocates to the nucleolus. In terms of tissue distribution, detected in adult brain cortex and fetal frontal lobe (at protein level). Highly expressed in brain cortex, putamen, amygdala, hippocampus and cerebellum.

It localises to the cell membrane. It is found in the early endosome membrane. Involved in neuronal migration during development of the cerebral neocortex. May function in a cell autonomous and a non-cell autonomous manner and play a role in appropriate adhesion between migrating neurons and radial glial fibers. May also regulate growth and differentiation of dendrites. The polypeptide is Dyslexia-associated protein KIAA0319 (KIAA0319) (Homo sapiens (Human)).